A 162-amino-acid polypeptide reads, in one-letter code: Probable cytosine deaminase (162 aa).

Residues 8-132 (EKDLAYLREA…PLYINSRDIL (125 aa)) enclose the CMP/dCMP-type deaminase domain. H59 lines the Zn(2+) pocket. The Proton donor role is filled by E61. 2 residues coordinate Zn(2+): C87 and C90. D159 provides a ligand contact to substrate.

Belongs to the cytidine and deoxycytidylate deaminase family. In terms of assembly, homodimer. The cofactor is Zn(2+).

It localises to the cytoplasm. The protein resides in the nucleus. The catalysed reaction is cytosine + H2O + H(+) = uracil + NH4(+). Its pathway is pyrimidine metabolism; UMP biosynthesis via salvage pathway; uracil from cytosine: step 1/1. Its function is as follows. Catalyzes the hydrolytic deamination of cytosine to uracil or 5-methylcytosine to thymine. Is involved in the pyrimidine salvage pathway, which allows the cell to utilize cytosine for pyrimidine nucleotide synthesis. The sequence is that of Probable cytosine deaminase from Schizosaccharomyces pombe (strain 972 / ATCC 24843) (Fission yeast).